The following is a 218-amino-acid chain: UPF0711 protein C18orf21 homolog (218 aa).

Ser126 bears the Phosphoserine mark. Residues 130–146 (ASAASKASPKTPKRAAA) show a composition bias toward low complexity. Residues 130 to 192 (ASAASKASPK…NGSKRKKHFS (63 aa)) form a disordered region. Thr140 bears the Phosphothreonine mark. Over residues 147 to 156 (GSTNISQSVH) the composition is skewed to polar residues. The span at 161-172 (RSPSSTVRTPTS) shows a compositional bias: low complexity. The span at 173 to 183 (GQSTPICSSRN) shows a compositional bias: polar residues.

This sequence belongs to the UPF0711 family.

The polypeptide is UPF0711 protein C18orf21 homolog (Rattus norvegicus (Rat)).